Here is a 426-residue protein sequence, read N- to C-terminus: NADH-quinone oxidoreductase subunit D 1 (426 aa).

The tract at residues 1–51 (MATEFTVPDSAARIATAQQAGGGTPVRSGPPDEGGEFSGDRMSLSMGPSHP) is disordered.

This sequence belongs to the complex I 49 kDa subunit family. NDH-1 is composed of 14 different subunits. Subunits NuoB, C, D, E, F, and G constitute the peripheral sector of the complex.

Its subcellular location is the cell inner membrane. It catalyses the reaction a quinone + NADH + 5 H(+)(in) = a quinol + NAD(+) + 4 H(+)(out). Functionally, NDH-1 shuttles electrons from NADH, via FMN and iron-sulfur (Fe-S) centers, to quinones in the respiratory chain. The immediate electron acceptor for the enzyme in this species is believed to be ubiquinone. Couples the redox reaction to proton translocation (for every two electrons transferred, four hydrogen ions are translocated across the cytoplasmic membrane), and thus conserves the redox energy in a proton gradient. The protein is NADH-quinone oxidoreductase subunit D 1 of Opitutus terrae (strain DSM 11246 / JCM 15787 / PB90-1).